Reading from the N-terminus, the 187-residue chain is Elongation factor P (187 aa).

The protein belongs to the elongation factor P family.

It localises to the cytoplasm. It participates in protein biosynthesis; polypeptide chain elongation. Its function is as follows. Involved in peptide bond synthesis. Stimulates efficient translation and peptide-bond synthesis on native or reconstituted 70S ribosomes in vitro. Probably functions indirectly by altering the affinity of the ribosome for aminoacyl-tRNA, thus increasing their reactivity as acceptors for peptidyl transferase. The chain is Elongation factor P from Syntrophus aciditrophicus (strain SB).